Here is a 132-residue protein sequence, read N- to C-terminus: Protein MrkF (132 aa).

It is found in the fimbrium. Appears to affect the stability of the intact fimbriae on the cell surface. This Klebsiella pneumoniae protein is Protein MrkF (mrkF).